We begin with the raw amino-acid sequence, 148 residues long: MFDVTLLILLGLAALGFISHNTTVAVSILVLIIVRVTPLSTFFPWIEQQGLSIGIIILTIGVMAPIASGTLPPSTLIHSFLNWKSLVAIAVGVIVSWLGGRGVTLMGSQPQLVAGLLVGTVLGVALFRGVPVGPLIAAGLVSLIVGKQ.

The next 4 membrane-spanning stretches (helical) occupy residues 14 to 34 (ALGFISHNTTVAVSILVLIIV), 51 to 71 (LSIGIIILTIGVMAPIASGTL), 86 to 106 (LVAIAVGVIVSWLGGRGVTLM), and 121 to 141 (VLGVALFRGVPVGPLIAAGLV).

It belongs to the UPF0756 family.

The protein resides in the cell membrane. This Shigella boydii serotype 18 (strain CDC 3083-94 / BS512) protein is UPF0756 membrane protein YeaL.